A 321-amino-acid chain; its full sequence is Beta-ketoacyl-[acyl-carrier-protein] synthase III (321 aa).

Catalysis depends on residues C115 and H248. Residues 249–253 form an ACP-binding region; sequence QANIR. N278 is an active-site residue.

It belongs to the thiolase-like superfamily. FabH family. In terms of assembly, homodimer.

The protein localises to the cytoplasm. It catalyses the reaction malonyl-[ACP] + acetyl-CoA + H(+) = 3-oxobutanoyl-[ACP] + CO2 + CoA. The protein operates within lipid metabolism; fatty acid biosynthesis. In terms of biological role, catalyzes the condensation reaction of fatty acid synthesis by the addition to an acyl acceptor of two carbons from malonyl-ACP. Catalyzes the first condensation reaction which initiates fatty acid synthesis and may therefore play a role in governing the total rate of fatty acid production. Possesses both acetoacetyl-ACP synthase and acetyl transacylase activities. Its substrate specificity determines the biosynthesis of branched-chain and/or straight-chain of fatty acids. This Aromatoleum aromaticum (strain DSM 19018 / LMG 30748 / EbN1) (Azoarcus sp. (strain EbN1)) protein is Beta-ketoacyl-[acyl-carrier-protein] synthase III.